A 287-amino-acid chain; its full sequence is Pyridoxal kinase PdxY (287 aa).

Substrate-binding positions include Ser-10 and 45–46; that span reads TQ. Residues Asp-112, Ala-144, Glu-149, Lys-182, and 209-212 contribute to the ATP site; that span reads RPLV. A substrate-binding site is contributed by Asp-224.

This sequence belongs to the pyridoxine kinase family. PdxY subfamily. In terms of assembly, homodimer. It depends on Mg(2+) as a cofactor.

It carries out the reaction pyridoxal + ATP = pyridoxal 5'-phosphate + ADP + H(+). Its pathway is cofactor metabolism; pyridoxal 5'-phosphate salvage; pyridoxal 5'-phosphate from pyridoxal: step 1/1. Functionally, pyridoxal kinase involved in the salvage pathway of pyridoxal 5'-phosphate (PLP). Catalyzes the phosphorylation of pyridoxal to PLP. The chain is Pyridoxal kinase PdxY from Shigella dysenteriae serotype 1 (strain Sd197).